A 466-amino-acid polypeptide reads, in one-letter code: Light-independent protochlorophyllide reductase subunit N (466 aa).

[4Fe-4S] cluster is bound by residues C23, C48, and C108.

It belongs to the BchN/ChlN family. In terms of assembly, protochlorophyllide reductase is composed of three subunits; ChlL, ChlN and ChlB. Forms a heterotetramer of two ChlB and two ChlN subunits. [4Fe-4S] cluster serves as cofactor.

It catalyses the reaction chlorophyllide a + oxidized 2[4Fe-4S]-[ferredoxin] + 2 ADP + 2 phosphate = protochlorophyllide a + reduced 2[4Fe-4S]-[ferredoxin] + 2 ATP + 2 H2O. It functions in the pathway porphyrin-containing compound metabolism; chlorophyll biosynthesis (light-independent). Its function is as follows. Component of the dark-operative protochlorophyllide reductase (DPOR) that uses Mg-ATP and reduced ferredoxin to reduce ring D of protochlorophyllide (Pchlide) to form chlorophyllide a (Chlide). This reaction is light-independent. The NB-protein (ChlN-ChlB) is the catalytic component of the complex. This is Light-independent protochlorophyllide reductase subunit N from Synechococcus elongatus (strain ATCC 33912 / PCC 7942 / FACHB-805) (Anacystis nidulans R2).